The sequence spans 629 residues: Chaperone protein HtpG (629 aa).

Residues 1–336 (MSSTENNGTA…TEDLSLNVSR (336 aa)) are a; substrate-binding. Positions 337-549 (EMVQSSPVMA…KDAIDSQLER (213 aa)) are b. Positions 550–629 (MMKMMNTPMP…ELIEAATLTR (80 aa)) are c.

It belongs to the heat shock protein 90 family. Homodimer.

It localises to the cytoplasm. In terms of biological role, molecular chaperone. Has ATPase activity. The protein is Chaperone protein HtpG of Chlorobium chlorochromatii (strain CaD3).